Reading from the N-terminus, the 387-residue chain is S-adenosylmethionine synthase (387 aa).

H16 serves as a coordination point for ATP. D18 lines the Mg(2+) pocket. E44 provides a ligand contact to K(+). L-methionine is bound by residues E57 and Q100. The flexible loop stretch occupies residues 100–110 (QSADIAVGVDE). Residues 165 to 167 (DAK), D241, 247 to 248 (RK), A264, and K268 each bind ATP. Position 241 (D241) interacts with L-methionine. K272 lines the L-methionine pocket.

Belongs to the AdoMet synthase family. Homotetramer; dimer of dimers. Requires Mg(2+) as cofactor. K(+) is required as a cofactor.

The protein resides in the cytoplasm. It carries out the reaction L-methionine + ATP + H2O = S-adenosyl-L-methionine + phosphate + diphosphate. The protein operates within amino-acid biosynthesis; S-adenosyl-L-methionine biosynthesis; S-adenosyl-L-methionine from L-methionine: step 1/1. Its function is as follows. Catalyzes the formation of S-adenosylmethionine (AdoMet) from methionine and ATP. The overall synthetic reaction is composed of two sequential steps, AdoMet formation and the subsequent tripolyphosphate hydrolysis which occurs prior to release of AdoMet from the enzyme. The polypeptide is S-adenosylmethionine synthase (Marinomonas sp. (strain MWYL1)).